The chain runs to 203 residues: Ras-like protein family member 10A (203 aa).

The tract at residues 1–203 is small GTPase-like; sequence MGGSLRVAVL…ALHPARCSLM (203 aa). 11-18 serves as a coordination point for GTP; it reads GAPGVGKT. The Effector region signature appears at 33 to 42; the sequence is HRPTDSPCLY. GTP-binding positions include 59–62 and 129–132; these read DGDV and NKRD. At cysteine 200 the chain carries Cysteine methyl ester. A lipid anchor (S-farnesyl cysteine) is attached at cysteine 200. Positions 201–203 are cleaved as a propeptide — removed in mature form; the sequence is SLM.

Belongs to the small GTPase superfamily. Ras family. In terms of processing, isoprenylation is essential for nucleolar localization, and the proliferation-inhibiting activity of RASL10A.

The protein resides in the cell membrane. It is found in the nucleus. The protein localises to the nucleolus. The catalysed reaction is GTP + H2O = GDP + phosphate + H(+). In terms of biological role, potent inhibitor of cellular proliferation. The polypeptide is Ras-like protein family member 10A (Rasl10a) (Mus musculus (Mouse)).